A 545-amino-acid chain; its full sequence is Membrane protein insertase YidC (545 aa).

Helical transmembrane passes span 350–370, 424–444, 461–481, and 498–518; these read IIGN…AVLY, LPML…FASV, ADPY…QTYL, and PLVF…YWVV.

The protein belongs to the OXA1/ALB3/YidC family. Type 1 subfamily. Interacts with the Sec translocase complex via SecD. Specifically interacts with transmembrane segments of nascent integral membrane proteins during membrane integration.

It localises to the cell inner membrane. Functionally, required for the insertion and/or proper folding and/or complex formation of integral membrane proteins into the membrane. Involved in integration of membrane proteins that insert both dependently and independently of the Sec translocase complex, as well as at least some lipoproteins. Aids folding of multispanning membrane proteins. The protein is Membrane protein insertase YidC of Neisseria gonorrhoeae (strain NCCP11945).